The sequence spans 488 residues: MVQGTTSDAGKSTVVAGLCRVLARAGMRVAPFKPQNMALNSAVTADGGEIGRAQALQAQAARVEPHTDMNPVLLKPSSDTGAQIIIHGKARLDLDARAYHAYKPEAMKAVLASHERLTQAYDVVVVEGAGSPAEINLRDRDIANMGFAERVDCPVVLVADIDRGGVFAHLVGTLDCLSDSERARVTGFIINRFRGDISLLQPGLDWLEARTGKPVFGVLPYLHGLHLDAEDAIVGAQSAKRGTPDALLRVIVPVLPRISNHTDFDALRAHPQVDLRFIGPGMPVPPADLVILPGSKSVRADLDFLRANGWEPALRRHLRYGGKVIGICGGMQMLGRQIHDPAGHEGPAGSSAGFGWLDYETTLAPHKQLRRVSGRLADADREAAVSGYEIHMGVSTGSGLERPALWLDDENGTRRADGACSEDGQVLATYVHGVFDEPTACEGLLRWAGLDGAQGIDLAALREASIERLADTLASHLDLGAMFAPLRR.

The region spanning 247-440 (LLRVIVPVLP…VHGVFDEPTA (194 aa)) is the GATase cobBQ-type domain. Residue cysteine 328 is the Nucleophile of the active site. The active site involves histidine 432.

The protein belongs to the CobB/CobQ family. CobQ subfamily.

The protein operates within cofactor biosynthesis; adenosylcobalamin biosynthesis. Functionally, catalyzes amidations at positions B, D, E, and G on adenosylcobyrinic A,C-diamide. NH(2) groups are provided by glutamine, and one molecule of ATP is hydrogenolyzed for each amidation. The polypeptide is Cobyric acid synthase (Cupriavidus pinatubonensis (strain JMP 134 / LMG 1197) (Cupriavidus necator (strain JMP 134))).